The primary structure comprises 778 residues: Endonuclease MutS2 (778 aa).

Residue 328 to 335 (GPNTGGKT) participates in ATP binding. The region spanning 702–777 (LDLRGKRYEE…GSGATIVTFK (76 aa)) is the Smr domain.

This sequence belongs to the DNA mismatch repair MutS family. MutS2 subfamily. Homodimer. Binds to stalled ribosomes, contacting rRNA.

Its function is as follows. Endonuclease that is involved in the suppression of homologous recombination and thus may have a key role in the control of bacterial genetic diversity. Functionally, acts as a ribosome collision sensor, splitting the ribosome into its 2 subunits. Detects stalled/collided 70S ribosomes which it binds and splits by an ATP-hydrolysis driven conformational change. Acts upstream of the ribosome quality control system (RQC), a ribosome-associated complex that mediates the extraction of incompletely synthesized nascent chains from stalled ribosomes and their subsequent degradation. Probably generates substrates for RQC. The polypeptide is Endonuclease MutS2 (Streptococcus pneumoniae (strain P1031)).